The sequence spans 349 residues: Ion-translocating oxidoreductase complex subunit D (349 aa).

The next 3 membrane-spanning stretches (helical) occupy residues 36–56 (CAFF…VALS), 77–99 (SAML…WMIV), and 124–144 (AMAA…SWIA). At T185 the chain carries FMN phosphoryl threonine. 5 consecutive transmembrane segments (helical) span residues 212–232 (GTGV…LVLL), 239–259 (WHIS…GFLL), 265–285 (ASPL…FIAT), 291–311 (ATSP…VYVI), and 315–335 (GGYP…APFI).

Belongs to the NqrB/RnfD family. The complex is composed of six subunits: RnfA, RnfB, RnfC, RnfD, RnfE and RnfG. FMN is required as a cofactor.

It is found in the cell inner membrane. Part of a membrane-bound complex that couples electron transfer with translocation of ions across the membrane. This is Ion-translocating oxidoreductase complex subunit D from Shewanella sp. (strain MR-4).